A 536-amino-acid polypeptide reads, in one-letter code: Lysosomal acid glucosylceramidase (536 aa).

The first 39 residues, 1-39 (MEFSSPSREECPKPSGRVSIMAGSLTGLLLLQAVSWASG), serve as a signal peptide directing secretion. 2 disulfides stabilise this stretch: cysteine 43–cysteine 55 and cysteine 57–cysteine 62. N-linked (GlcNAc...) asparagine glycans are attached at residues asparagine 58, asparagine 98, and asparagine 185. The active-site Proton donor is the glutamate 274. An N-linked (GlcNAc...) asparagine glycan is attached at asparagine 309. The Nucleophile role is filled by glutamate 379. Asparagine 501 is a glycosylation site (N-linked (GlcNAc...) asparagine).

The protein belongs to the glycosyl hydrolase 30 family. In terms of assembly, interacts with saposin-C. Interacts with SCARB2. Interacts with TCP1. Interacts with GRN; this interaction prevents aggregation of GBA1-SCARB2 complex via interaction with HSPA1A upon stress.

It is found in the lysosome membrane. It carries out the reaction a beta-D-glucosyl-(1&lt;-&gt;1')-N-acylsphing-4-enine + H2O = an N-acylsphing-4-enine + D-glucose. The enzyme catalyses a beta-D-galactosyl-(1&lt;-&gt;1')-N-acylsphing-4-enine + H2O = an N-acylsphing-4-enine + D-galactose. The catalysed reaction is cholesteryl 3-beta-D-glucoside + H2O = cholesterol + D-glucose. It catalyses the reaction a beta-D-glucosyl-(1&lt;-&gt;1')-N-acylsphing-4-enine + cholesterol = cholesteryl 3-beta-D-glucoside + an N-acylsphing-4-enine. It carries out the reaction beta-D-glucosyl-N-(9Z-octadecenoyl)-sphing-4E-enine + cholesterol = N-(9Z-octadecenoyl)-sphing-4-enine + cholesteryl 3-beta-D-glucoside. The enzyme catalyses beta-D-glucosyl-N-octanoylsphing-4E-enine + cholesterol = N-octanoylsphing-4-enine + cholesteryl 3-beta-D-glucoside. The catalysed reaction is beta-D-glucosyl-N-dodecanoylsphing-4-enine + cholesterol = N-dodecanoylsphing-4-enine + cholesteryl 3-beta-D-glucoside. It catalyses the reaction beta-D-glucosyl-(1&lt;-&gt;1)-N-octadecanoylsphing-4-enine + cholesterol = N-octadecanoylsphing-4-enine + cholesteryl 3-beta-D-glucoside. It carries out the reaction beta-D-glucosyl-(1&lt;-&gt;1')-N-(15Z-tetracosenoyl)-sphing-4-enine + cholesterol = N-(15Z-tetracosenoyl)-sphing-4-enine + cholesteryl 3-beta-D-glucoside. The enzyme catalyses a beta-D-galactosyl-(1&lt;-&gt;1')-N-acylsphing-4-enine + cholesterol = cholesteryl 3-beta-D-galactoside + an N-acylsphing-4-enine. The catalysed reaction is 1-(beta-D-galactosyl)-N-dodecanoylsphing-4-enine + cholesterol = cholesteryl 3-beta-D-galactoside + N-dodecanoylsphing-4-enine. It catalyses the reaction a beta-D-xylosyl-(1&lt;-&gt;1')-N-acylsphing-4-enine + cholesterol = cholesteryl 3-beta-D-xyloside + an N-acylsphing-4-enine. It carries out the reaction beta-D-xylosyl-(1&lt;-&gt;1')-N-(9Z-octadecenoyl)-sphing-4-enine + cholesterol = cholesteryl 3-beta-D-xyloside + N-(9Z-octadecenoyl)-sphing-4-enine. The protein operates within steroid metabolism; cholesterol metabolism. It participates in sphingolipid metabolism. In terms of biological role, glucosylceramidase that catalyzes, within the lysosomal compartment, the hydrolysis of glucosylceramides/GlcCers (such as beta-D-glucosyl-(1&lt;-&gt;1')-N-acylsphing-4-enine) into free ceramides (such as N-acylsphing-4-enine) and glucose. Plays a central role in the degradation of complex lipids and the turnover of cellular membranes. Through the production of ceramides, participates in the PKC-activated salvage pathway of ceramide formation. Catalyzes the glucosylation of cholesterol, through a transglucosylation reaction where glucose is transferred from GlcCer to cholesterol. GlcCer containing mono-unsaturated fatty acids (such as beta-D-glucosyl-N-(9Z-octadecenoyl)-sphing-4-enine) are preferred as glucose donors for cholesterol glucosylation when compared with GlcCer containing same chain length of saturated fatty acids (such as beta-D-glucosyl-N-octadecanoyl-sphing-4-enine). Under specific conditions, may alternatively catalyze the reverse reaction, transferring glucose from cholesteryl 3-beta-D-glucoside to ceramide. Can also hydrolyze cholesteryl 3-beta-D-glucoside producing glucose and cholesterol. Catalyzes the hydrolysis of galactosylceramides/GalCers (such as beta-D-galactosyl-(1&lt;-&gt;1')-N-acylsphing-4-enine), as well as the transfer of galactose between GalCers and cholesterol in vitro, but with lower activity than with GlcCers. Contrary to GlcCer and GalCer, xylosylceramide/XylCer (such as beta-D-xyosyl-(1&lt;-&gt;1')-N-acylsphing-4-enine) is not a good substrate for hydrolysis, however it is a good xylose donor for transxylosylation activity to form cholesteryl 3-beta-D-xyloside. This is Lysosomal acid glucosylceramidase (GBA1) from Pan troglodytes (Chimpanzee).